A 470-amino-acid polypeptide reads, in one-letter code: Serine/threonine-protein kinase PEPKR2 (470 aa).

In terms of domain architecture, Protein kinase spans 107 to 355 (YVFGRNIGKG…ADEVLRHPWI (249 aa)). ATP is bound by residues 113-121 (IGKGKFGSV) and Lys-136. Residue Asp-224 is the Proton acceptor of the active site. Residues 377–386 (GSSTCLQNRS) show a composition bias toward polar residues. Disordered regions lie at residues 377-419 (GSST…EEED) and 441-464 (RSRV…TSTS). The span at 387-403 (PTEKTDLNRADREKKIP) shows a compositional bias: basic and acidic residues. Residues 445-464 (CSPTNNPIEQQHSSNLTSTS) show a composition bias toward polar residues.

The protein belongs to the protein kinase superfamily. Ser/Thr protein kinase family.

It carries out the reaction L-seryl-[protein] + ATP = O-phospho-L-seryl-[protein] + ADP + H(+). The enzyme catalyses L-threonyl-[protein] + ATP = O-phospho-L-threonyl-[protein] + ADP + H(+). This chain is Serine/threonine-protein kinase PEPKR2 (PEPKR2), found in Arabidopsis thaliana (Mouse-ear cress).